A 214-amino-acid chain; its full sequence is Probable transaldolase (214 aa).

Lysine 83 (schiff-base intermediate with substrate) is an active-site residue.

It belongs to the transaldolase family. Type 3B subfamily.

Its subcellular location is the cytoplasm. The catalysed reaction is D-sedoheptulose 7-phosphate + D-glyceraldehyde 3-phosphate = D-erythrose 4-phosphate + beta-D-fructose 6-phosphate. Its pathway is carbohydrate degradation; pentose phosphate pathway; D-glyceraldehyde 3-phosphate and beta-D-fructose 6-phosphate from D-ribose 5-phosphate and D-xylulose 5-phosphate (non-oxidative stage): step 2/3. In terms of biological role, transaldolase is important for the balance of metabolites in the pentose-phosphate pathway. The polypeptide is Probable transaldolase (Citrifermentans bemidjiense (strain ATCC BAA-1014 / DSM 16622 / JCM 12645 / Bem) (Geobacter bemidjiensis)).